The sequence spans 644 residues: MIRIRFGMDVLLVLLLATCLLTPAHGTPLEWDFAVTLRTKIQFMDSSWQTIATAAHEFDELSALTFDESEELIYFNDLKHRNGSIFSLKRDLVAANHVAEQTIARTGNESVGGLAYDPLNMNLFWSDTEQRKIFFAPIYGSATPKVLVDLSAEGGRPDGVAVDVCRRKLYWTNSNVTHPTVERINLDGSNRTVIINSDIDMPRGIVVDQLSDRLFWIDDLKGVFFSVESCKLDGSDRQVVLKDKHHEPLNLAVTNDAIYWTDRTTRAVWSHPKVPVIKVTTTSKPEEEDSTDSTDFTDPEPMAEDCPLVRVANLSEEARGIVVRTGFYQRLQKDHHCASIVRKVKERVVEQNRKFEIRSMLDQKIKVLEDERCMNGGEYRAATDLCICPTGFKGSRCEIRECHNYCVHGTCQMSELAYPKCYCQPGFTGERCELSVCSGLCLNGGHCRVSKDENEAPSCECPAKFGGARCEQNSTEICSLFCRLLKHEPEMYVPFGCHSICEELAQDNSTYIAVPQYEHLEVCLTPRVWTSSVIIILVVGIVSSLLLVAVIVHGIRRLYKPKRPRIRKTFVVRKQARTNSAGDTPLTNRPLATEQCEITIENCCNMNICETPCFDPKLVEQTLSKSSCKEDKKILIHNMEDDLY.

The first 26 residues, 1–26 (MIRIRFGMDVLLVLLLATCLLTPAHG), serve as a signal peptide directing secretion. Over 27–531 (TPLEWDFAVT…VCLTPRVWTS (505 aa)) the chain is Extracellular. 2 N-linked (GlcNAc...) asparagine glycosylation sites follow: N82 and N108. LDL-receptor class B repeat units lie at residues 121–166 (MNLF…DVCR), 167–211 (RKLY…DQLS), and 212–257 (DRLF…TNDA). N175 and N190 each carry an N-linked (GlcNAc...) asparagine glycan. Residues 280–301 (TTTSKPEEEDSTDSTDFTDPEP) are disordered. The span at 286 to 301 (EEEDSTDSTDFTDPEP) shows a compositional bias: acidic residues. N313 carries N-linked (GlcNAc...) asparagine glycosylation. 2 consecutive EGF-like domains span residues 398–430 (EIRE…FTGE) and 433–471 (ELSV…ARCE). 5 cysteine pairs are disulfide-bonded: C402-C411, C406-C421, C437-C447, C441-C459, and C461-C470. Residues N473 and N508 are each glycosylated (N-linked (GlcNAc...) asparagine). The chain crosses the membrane as a helical span at residues 532-552 (SVIIILVVGIVSSLLLVAVIV). At 553 to 644 (HGIRRLYKPK…LIHNMEDDLY (92 aa)) the chain is on the cytoplasmic side.

Belongs to the cueball family.

Its subcellular location is the cell membrane. In terms of biological role, has a role in spermatogenesis and oogenesis. The polypeptide is Protein cueball (Drosophila sechellia (Fruit fly)).